Here is a 447-residue protein sequence, read N- to C-terminus: Tol-Pal system protein TolB (447 aa).

An N-terminal signal peptide occupies residues 1-34 (MSSRLPALPLSRRQALLGGAGSAAALLLPGGAQA). The segment at 426–447 (RNEQKVPTPGFASDPAWSPLLS) is disordered.

It belongs to the TolB family. In terms of assembly, the Tol-Pal system is composed of five core proteins: the inner membrane proteins TolA, TolQ and TolR, the periplasmic protein TolB and the outer membrane protein Pal. They form a network linking the inner and outer membranes and the peptidoglycan layer.

Its subcellular location is the periplasm. In terms of biological role, part of the Tol-Pal system, which plays a role in outer membrane invagination during cell division and is important for maintaining outer membrane integrity. In Rhodopseudomonas palustris (strain BisB18), this protein is Tol-Pal system protein TolB.